Consider the following 319-residue polypeptide: Ribose-phosphate pyrophosphokinase (319 aa).

ATP contacts are provided by residues 40-42 and 99-100; these read DGE and RQ. Positions 134 and 174 each coordinate Mg(2+). Residue Lys-198 is part of the active site. D-ribose 5-phosphate contacts are provided by residues Arg-200, Asp-224, and 228–232; that span reads DTAGT.

It belongs to the ribose-phosphate pyrophosphokinase family. Class I subfamily. Homohexamer. Requires Mg(2+) as cofactor.

Its subcellular location is the cytoplasm. It carries out the reaction D-ribose 5-phosphate + ATP = 5-phospho-alpha-D-ribose 1-diphosphate + AMP + H(+). Its pathway is metabolic intermediate biosynthesis; 5-phospho-alpha-D-ribose 1-diphosphate biosynthesis; 5-phospho-alpha-D-ribose 1-diphosphate from D-ribose 5-phosphate (route I): step 1/1. Its function is as follows. Involved in the biosynthesis of the central metabolite phospho-alpha-D-ribosyl-1-pyrophosphate (PRPP) via the transfer of pyrophosphoryl group from ATP to 1-hydroxyl of ribose-5-phosphate (Rib-5-P). This chain is Ribose-phosphate pyrophosphokinase, found in Coxiella burnetii (strain RSA 493 / Nine Mile phase I).